The sequence spans 197 residues: Dephospho-CoA kinase (197 aa).

In terms of domain architecture, DPCK spans 2–197 (IIGITGGIAS…SALLSLANPR (196 aa)). Residue 10–15 (ASGKST) participates in ATP binding.

The protein belongs to the CoaE family.

It is found in the cytoplasm. The catalysed reaction is 3'-dephospho-CoA + ATP = ADP + CoA + H(+). The protein operates within cofactor biosynthesis; coenzyme A biosynthesis; CoA from (R)-pantothenate: step 5/5. Functionally, catalyzes the phosphorylation of the 3'-hydroxyl group of dephosphocoenzyme A to form coenzyme A. This chain is Dephospho-CoA kinase, found in Streptococcus pyogenes serotype M3 (strain ATCC BAA-595 / MGAS315).